A 69-amino-acid polypeptide reads, in one-letter code: UPF0437 protein AZC_3451 (69 aa).

It belongs to the UPF0437 family.

The protein is UPF0437 protein AZC_3451 of Azorhizobium caulinodans (strain ATCC 43989 / DSM 5975 / JCM 20966 / LMG 6465 / NBRC 14845 / NCIMB 13405 / ORS 571).